Here is a 173-residue protein sequence, read N- to C-terminus: Ribulose bisphosphate carboxylase small subunit, chloroplastic 1 (173 aa).

The N-terminal 52 residues, 1–52 (MMVSTAAVARVRPAQTNMVGAFNGCRSSVAFPATRKANNDLSTLPSSGGRVS), are a transit peptide targeting the chloroplast.

This sequence belongs to the RuBisCO small chain family. Heterohexadecamer of 8 large and 8 small subunits.

The protein localises to the plastid. The protein resides in the chloroplast. In terms of biological role, ruBisCO catalyzes two reactions: the carboxylation of D-ribulose 1,5-bisphosphate, the primary event in carbon dioxide fixation, as well as the oxidative fragmentation of the pentose substrate. Both reactions occur simultaneously and in competition at the same active site. Although the small subunit is not catalytic it is essential for maximal activity. The sequence is that of Ribulose bisphosphate carboxylase small subunit, chloroplastic 1 from Lemna gibba (Swollen duckweed).